We begin with the raw amino-acid sequence, 551 residues long: Mesoderm induction early response protein 3 (551 aa).

The segment covering 1–16 has biased composition (low complexity); the sequence is MAEASFGSSSPVGSLS. Disordered stretches follow at residues 1-62 and 113-169; these read MAEA…EKEG and LSGD…GNSP. Residues 17 to 36 show a composition bias toward basic and acidic residues; sequence SEDHDFDPTAEMLVHDYDDE. Phosphoserine occurs at positions 52, 53, and 114. The segment covering 121–134 has biased composition (polar residues); the sequence is QSSADDLTPSVTSH. Positions 154–163 are enriched in acidic residues; the sequence is KESEIEDVET. Position 156 is a phosphoserine (Ser-156). At Thr-163 the chain carries Phosphothreonine. Residues Ser-165 and Ser-168 each carry the phosphoserine modification. Residues 174 to 273 form the ELM2 domain; it reads REIMIGLEYQ…EAIERYCCNG (100 aa). An SANT domain is found at 278–330; that stretch reads EGMTAWTEEECRSFEHALMLHGKDFHLIQKDKVRSRTVAECVAFYYMWKKSER.

It is found in the nucleus. Transcriptional repressor. The protein is Mesoderm induction early response protein 3 (Mier3) of Mus musculus (Mouse).